The following is a 334-amino-acid chain: L-lactate dehydrogenase B-A chain (334 aa).

Residues 30–58 (GQVG…VEDR) and R100 contribute to the NAD(+) site. Residues R107, N139, and R170 each coordinate substrate. N139 provides a ligand contact to NAD(+). H194 functions as the Proton acceptor in the catalytic mechanism. A substrate-binding site is contributed by T249.

This sequence belongs to the LDH/MDH superfamily. LDH family. In terms of assembly, homotetramer.

It is found in the cytoplasm. The enzyme catalyses (S)-lactate + NAD(+) = pyruvate + NADH + H(+). It functions in the pathway fermentation; pyruvate fermentation to lactate; (S)-lactate from pyruvate: step 1/1. The protein is L-lactate dehydrogenase B-A chain (ldhba) of Danio rerio (Zebrafish).